A 198-amino-acid polypeptide reads, in one-letter code: Putative pseudouridine methyltransferase (198 aa).

Residues Met132 and Cys186 each contribute to the S-adenosyl-L-methionine site.

This sequence belongs to the methyltransferase superfamily. TrmY family.

Its subcellular location is the cytoplasm. This Shewanella baltica (strain OS223) protein is Putative pseudouridine methyltransferase.